The sequence spans 156 residues: Probable succinate transporter subunit YjjB (156 aa).

The next 4 helical transmembrane spans lie at 7–27, 54–74, 86–106, and 128–148; these read WALL…AMVF, FGMD…MIGI, VFTV…TAMI, and FLKA…PGLW.

This sequence belongs to the ThrE exporter (TC 2.A.79) family. As to quaternary structure, the transporter is composed of YjjB and YjjP.

The protein localises to the cell inner membrane. Its function is as follows. Involved in succinate export with YjjP. Both proteins are required for export. The protein is Probable succinate transporter subunit YjjB of Yersinia enterocolitica serotype O:8 / biotype 1B (strain NCTC 13174 / 8081).